Here is a 719-residue protein sequence, read N- to C-terminus: Putative alpha-1,3-mannosyltransferase MNT4 (719 aa).

Topologically, residues methionine 1 to histidine 4 are cytoplasmic. Residues leucine 5–phenylalanine 22 form a helical membrane-spanning segment. Over arginine 23–aspartate 719 the chain is Lumenal. Residues asparagine 148, asparagine 273, and asparagine 449 are each glycosylated (N-linked (GlcNAc...) asparagine).

Belongs to the MNN1/MNT family.

Its subcellular location is the golgi apparatus membrane. It participates in protein modification; protein glycosylation. Its function is as follows. Responsible for addition of the terminal mannose residues to the outer chain of core N-linked polysaccharides and to O-linked mannotriose. Implicated in late Golgi modifications. The sequence is that of Putative alpha-1,3-mannosyltransferase MNT4 (MNT4) from Candida albicans (strain SC5314 / ATCC MYA-2876) (Yeast).